The chain runs to 78 residues: RTX-VII (78 aa).

Positions 1–22 are cleaved as a signal peptide; the sequence is MKTIVYLIVSILLLSSTVLVLA. Residues 23–40 constitute a propeptide that is removed on maturation; sequence EGNAASHELQEYPIEEQR. Cystine bridges form between Cys42/Cys58, Cys47/Cys63, Cys57/Cys73, and Cys65/Cys71. An Arginine amide modification is found at Arg76.

As to expression, expressed by the venom gland.

Its subcellular location is the secreted. Agonist of rat Nav1.3/SCN3A. This toxin increases the peak current amplitude, and potently inhibits the fast inactivation of the channel (EC(50)=120 nM). The inhibition of fast inactivation is voltage-independent (depolarizing voltages ranging from 220 mV to 130 mV). The toxin might bind to the domain IV of the Nav1.3 channel, while domain II might not participate in interacting with the toxin but could determine the efficacy of RTX-VII. In vivo, when intracerebroventricularly injected into mice, the toxin causes involuntary body twitching (seizure-like symptoms). The polypeptide is RTX-VII (Macrothele raveni (Funnel-web spider)).